The chain runs to 236 residues: MSQEWKEYAKRVLDEWQPKTKLGMLVKEGQITDIHEIFRKGYQIKEPEIIDVLLPEVNARENQEILDIALTVRMTDSGRRVRFRVLAAVGNRDGYVGLGIGHGREVGIAIRKAINYAKLNIIEIKRGCGSWECRCRRPHSVPFTVEGKEGSVRVKLIPGPRGLGLVIGDVGKKILRLAGIQDVWSQTLGETRTTVNFAKAVFNALYNTNKVVVTPEMIERYGIVVGRAMPASFTLE.

Positions glutamate 61–isoleucine 124 constitute an S5 DRBM domain.

This sequence belongs to the universal ribosomal protein uS5 family. Part of the 30S ribosomal subunit. Contacts protein S4.

With S4 and S12 plays an important role in translational accuracy. The protein is Small ribosomal subunit protein uS5 of Pyrococcus abyssi (strain GE5 / Orsay).